The sequence spans 968 residues: MTETPTGTQSSRETAADDTPRHRYTAGLAGEIERAWQQRWTQDGTFDVANPVGSLAPADGSAVPADKMFVQDMFPYPSGEGLHVGHPLGYIATDVYARYYRMTGRNVLHALGFDAFGLPAEQYAIQTGTHPRTRTEANIVNFRRQLGRLGLGHDSRRSFSTTDVDFYKWTQWIFLQIYNAWFDTAQNKARPVAELIAEFEAGTREVGDGRRWADLDAGERADVVDSRRLVYLADSVVNWCPGLGTVLANEEVTSDGRSERGNFPVFRKRLRQWMMRITAYSDRLLEDLDVLDWPDKVKTMQRNWIGRSTGASVEFGTDAGDIEVFTTRPDTLFGATYMVLAPEHDLVDRLVADQWPADVDARWTFGAATPREAVAAYRASIAAKSDLERQENKAKTGVFIGAYATNPANAKQVPVFIADYVLAGYGTGAIMAVPGGDQRDWDFATEFGLPIIEVVRPVADRPGEDTGAGGDVSQAAYTGDGVMVNSGFLDGMDVSAAKEAMTERLSADGRGRERVEYKLRDWLFARQRYWGEPFPIVYDADDRAHGLPEELLPVELPDVPDYSPVLFDPDDADSEPSPPLAKATEWVNVELDLGDGRKRYTRDTNVMPQWAGSSWYELRYADPHNTEALCAKENEAYWMGPRPAEHGPDDPGGVDLYVGGVEHAVLHLLYSRFWHKVLYDLGHVSSREPYRRLVNQGYIQAFAYTDARGSYVPAAEVVERDGKFFWPGPDGEIEVNQEFGKIGKSLKNSVSPDEICDDYGADTLRVYEMSMGPLEASRPWATKDVVGAHRFLQRVWRLVVSEETGETVVTDDALDEDTLRLLHRTIAGTADDYAALRNNTAAAKLIEYTNHLTKQSVTARAALEPLVLMVAPLAPHLAEELWRRLGHDASLAHGPFPVADERYLVEDTVEYPVQVNGKVRGRVTVAADAPADAVEAAALADDKVVAFLDGKTPKKVIVVAGRLVNVVL.

Over residues 1–13 (MTETPTGTQSSRE) the composition is skewed to polar residues. A disordered region spans residues 1 to 22 (MTETPTGTQSSRETAADDTPRH). Residues 75–86 (PYPSGEGLHVGH) carry the 'HIGH' region motif. Residues 741–745 (KIGKS) carry the 'KMSKS' region motif. Position 744 (Lys744) interacts with ATP.

Belongs to the class-I aminoacyl-tRNA synthetase family.

The protein localises to the cytoplasm. The catalysed reaction is tRNA(Leu) + L-leucine + ATP = L-leucyl-tRNA(Leu) + AMP + diphosphate. The sequence is that of Leucine--tRNA ligase from Mycolicibacterium vanbaalenii (strain DSM 7251 / JCM 13017 / BCRC 16820 / KCTC 9966 / NRRL B-24157 / PYR-1) (Mycobacterium vanbaalenii).